The primary structure comprises 265 residues: Catechol O-methyltransferase (265 aa).

The Cytoplasmic portion of the chain corresponds to 1 to 2 (ML). The helical; Signal-anchor for type II membrane protein transmembrane segment at 3–19 (LAAVSLGLLLLAFLLLL) threads the bilayer. Topologically, residues 20-265 (RHLGWGLVAI…QGPGSSPVKS (246 aa)) are extracellular. Residues V85, E107, S115, E133, I134, 160–163 (GASQ), S162, and D184 contribute to the S-adenosyl-L-methionine site. D184 serves as a coordination point for Mg(2+). Residue K187 participates in substrate binding. Positions 212 and 213 each coordinate Mg(2+). Substrate contacts are provided by N213 and E242. A phosphoserine mark is found at S260, S261, and S265.

The protein belongs to the class I-like SAM-binding methyltransferase superfamily. Cation-dependent O-methyltransferase family. The cofactor is Mg(2+).

The protein resides in the cytoplasm. The protein localises to the cell membrane. It carries out the reaction a catechol + S-adenosyl-L-methionine = a guaiacol + S-adenosyl-L-homocysteine + H(+). The catalysed reaction is 2-hydroxyestrone + S-adenosyl-L-methionine = 2-hydroxy-3-methoxy-estrone + S-adenosyl-L-homocysteine + H(+). It catalyses the reaction 4-hydroxyestrone + S-adenosyl-L-methionine = 4-methoxyestrone + S-adenosyl-L-homocysteine + H(+). The enzyme catalyses 2-hydroxyestrone + S-adenosyl-L-methionine = 2-methoxyestrone + S-adenosyl-L-homocysteine + H(+). It carries out the reaction 4-hydroxy-17beta-estradiol + S-adenosyl-L-methionine = 4-methoxy-17beta-estradiol + S-adenosyl-L-homocysteine + H(+). The catalysed reaction is 2-hydroxy-17beta-estradiol + S-adenosyl-L-methionine = 2-hydroxy-3-methoxy-17beta-estradiol + S-adenosyl-L-homocysteine + H(+). It catalyses the reaction 2-hydroxy-17beta-estradiol + S-adenosyl-L-methionine = 2-methoxy-17beta-estradiol + S-adenosyl-L-homocysteine + H(+). Catalyzes the O-methylation, and thereby the inactivation, of catecholamine neurotransmitters and catechol hormones. Also shortens the biological half-lives of certain neuroactive drugs, like L-DOPA, alpha-methyl DOPA and isoproterenol. This Mus musculus (Mouse) protein is Catechol O-methyltransferase.